The chain runs to 271 residues: Shikimate dehydrogenase-like protein HI_0607 (271 aa).

Catalysis depends on K67, which acts as the Proton donor/acceptor. D103 contacts substrate. Residues 126–130 (GSGGM), K154, and S184 contribute to the NADP(+) site.

It belongs to the shikimate dehydrogenase-like family. In terms of assembly, homodimer.

The catalysed reaction is shikimate + NADP(+) = 3-dehydroshikimate + NADPH + H(+). In terms of biological role, in vitro, is able to catalyze the NADP(+)-dependent oxidation of shikimate to 3-dehydroshikimate. However, has much lower activity than classical shikimate dehydrogenases AroE, indicating that shikimate may not be the biological substrate. Cannot utilize NAD(+) instead of NADP(+). Is not able to catalyze the oxidation of quinate. The protein is Shikimate dehydrogenase-like protein HI_0607 of Haemophilus influenzae (strain ATCC 51907 / DSM 11121 / KW20 / Rd).